The sequence spans 40 residues: Bacterioferritin heavy chain (40 aa).

Positions 1-40 (MRGNPEVIDYLNMLIGGELAARDQYLIHSRMYEDWGLTKY) constitute a Ferritin-like diiron domain. Residue E18 participates in Fe cation binding.

This sequence belongs to the bacterioferritin family. In terms of assembly, oligomer consisting of two types of subunits: light chain and heavy chain.

Its function is as follows. May perform analogous functions in iron detoxification and storage to that of animal ferritins. Contains approximately 750 iron atoms per molecule. This is Bacterioferritin heavy chain from Absidia spinosa.